The chain runs to 456 residues: Phosphomethylpyrimidine synthase (456 aa).

Residues asparagine 80, methionine 109, tyrosine 139, histidine 175, 195 to 197 (SRG), 236 to 239 (DSLR), and glutamate 275 each bind substrate. Histidine 279 contributes to the Zn(2+) binding site. Tyrosine 302 provides a ligand contact to substrate. Histidine 343 is a Zn(2+) binding site. Residues cysteine 423, cysteine 426, and cysteine 431 each contribute to the [4Fe-4S] cluster site.

This sequence belongs to the ThiC family. Requires [4Fe-4S] cluster as cofactor.

The enzyme catalyses 5-amino-1-(5-phospho-beta-D-ribosyl)imidazole + S-adenosyl-L-methionine = 4-amino-2-methyl-5-(phosphooxymethyl)pyrimidine + CO + 5'-deoxyadenosine + formate + L-methionine + 3 H(+). Its pathway is cofactor biosynthesis; thiamine diphosphate biosynthesis. In terms of biological role, catalyzes the synthesis of the hydroxymethylpyrimidine phosphate (HMP-P) moiety of thiamine from aminoimidazole ribotide (AIR) in a radical S-adenosyl-L-methionine (SAM)-dependent reaction. The polypeptide is Phosphomethylpyrimidine synthase (Prochlorococcus marinus (strain MIT 9215)).